A 182-amino-acid polypeptide reads, in one-letter code: uncharacterized protein (182 aa).

2 BNR repeats span residues 58–69 and 102–113; these read WISFDAGENWET and YITDDRGESWRA.

This is an uncharacterized protein from Saccharomyces cerevisiae (strain ATCC 204508 / S288c) (Baker's yeast).